Consider the following 213-residue polypeptide: NADH-quinone oxidoreductase subunit B 1 (213 aa).

Residues C82, C83, C148, and C177 each contribute to the [4Fe-4S] cluster site.

It belongs to the complex I 20 kDa subunit family. As to quaternary structure, NDH-1 is composed of 14 different subunits. Subunits NuoB, C, D, E, F, and G constitute the peripheral sector of the complex. [4Fe-4S] cluster is required as a cofactor.

The protein localises to the cell inner membrane. The enzyme catalyses a quinone + NADH + 5 H(+)(in) = a quinol + NAD(+) + 4 H(+)(out). In terms of biological role, NDH-1 shuttles electrons from NADH, via FMN and iron-sulfur (Fe-S) centers, to quinones in the respiratory chain. The immediate electron acceptor for the enzyme in this species is believed to be ubiquinone. Couples the redox reaction to proton translocation (for every two electrons transferred, four hydrogen ions are translocated across the cytoplasmic membrane), and thus conserves the redox energy in a proton gradient. In Koribacter versatilis (strain Ellin345), this protein is NADH-quinone oxidoreductase subunit B 1.